The sequence spans 211 residues: MAGEHIKVIYFDGRGRAESIRMTLVAAGVDYEDERISFQDWPKIKPTIPGGRLPAVKVTDDHGHVKWMLESLAIARYMAKKHHMMGETDEEYYSVEKLIGQAEDVEHEYHKTLMKPQEEKEKITKEILNGKVPVLLNMICESLKGSTGKLAVGDKVTLADLVLIAVIDHVTDLDKGFLTGKYPEIHKHRENLLASSPRLAKYLSNRPATPF.

Ala-2 bears the N-acetylalanine mark. In terms of domain architecture, GST N-terminal spans 4–86 (EHIKVIYFDG…YMAKKHHMMG (83 aa)). Residues Tyr-10, 10–11 (YF), Arg-16, 41–45 (WPKIK), Leu-53, 55–56 (AV), and 70–71 (ES) contribute to the glutathione site. The GST C-terminal domain maps to 88–211 (TDEEYYSVEK…YLSNRPATPF (124 aa)).

This sequence belongs to the GST superfamily. Mu family. As to quaternary structure, homodimer. As to expression, in the adult, expressed in excretory epithelial cells but absent from the caecal epithelium and flame cells. Also expressed in the tegument and its extensions into the parenchyma. In the schistosomulum, expressed in the tegument and associated structures. Not expressed in digestive tract, reproductive organs or muscles (at protein level).

It catalyses the reaction RX + glutathione = an S-substituted glutathione + a halide anion + H(+). Its function is as follows. Conjugation of reduced glutathione to a wide number of exogenous and endogenous hydrophobic electrophiles. Functionally, GST isoenzymes appear to play a central role in the parasite detoxification system. Other functions are also suspected including a role in increasing the solubility of haematin in the parasite gut. In Schistosoma mansoni (Blood fluke), this protein is Glutathione S-transferase class-mu 28 kDa isozyme (GST28).